The following is a 729-amino-acid chain: Fatty acid oxidation complex subunit alpha (729 aa).

The enoyl-CoA hydratase/isomerase stretch occupies residues 1–189 (MLYQSETLQL…KIGLVDAVVD (189 aa)). Position 296 (D296) interacts with substrate. The tract at residues 311-729 (AAPKLAAVLG…LLDVSTNQPA (419 aa)) is 3-hydroxyacyl-CoA dehydrogenase. NAD(+) contacts are provided by residues M324, D343, 400–402 (VVE), K407, and S429. Residue H450 is the For 3-hydroxyacyl-CoA dehydrogenase activity of the active site. N453 provides a ligand contact to NAD(+). Substrate-binding residues include N500 and Y660.

The protein in the N-terminal section; belongs to the enoyl-CoA hydratase/isomerase family. This sequence in the C-terminal section; belongs to the 3-hydroxyacyl-CoA dehydrogenase family. Heterotetramer of two alpha chains (FadB) and two beta chains (FadA).

The catalysed reaction is a (3S)-3-hydroxyacyl-CoA + NAD(+) = a 3-oxoacyl-CoA + NADH + H(+). The enzyme catalyses a (3S)-3-hydroxyacyl-CoA = a (2E)-enoyl-CoA + H2O. It carries out the reaction a 4-saturated-(3S)-3-hydroxyacyl-CoA = a (3E)-enoyl-CoA + H2O. It catalyses the reaction (3S)-3-hydroxybutanoyl-CoA = (3R)-3-hydroxybutanoyl-CoA. The catalysed reaction is a (3Z)-enoyl-CoA = a 4-saturated (2E)-enoyl-CoA. The enzyme catalyses a (3E)-enoyl-CoA = a 4-saturated (2E)-enoyl-CoA. It functions in the pathway lipid metabolism; fatty acid beta-oxidation. Its function is as follows. Involved in the aerobic and anaerobic degradation of long-chain fatty acids via beta-oxidation cycle. Catalyzes the formation of 3-oxoacyl-CoA from enoyl-CoA via L-3-hydroxyacyl-CoA. It can also use D-3-hydroxyacyl-CoA and cis-3-enoyl-CoA as substrate. The protein is Fatty acid oxidation complex subunit alpha of Yersinia pestis bv. Antiqua (strain Antiqua).